The primary structure comprises 320 residues: Olfactory receptor 2C3 (320 aa).

Residues 1 to 26 (MMEIANVSSPEVFVLLGFSTRPSLET) lie on the Extracellular side of the membrane. Residue asparagine 6 is glycosylated (N-linked (GlcNAc...) asparagine). The chain crosses the membrane as a helical span at residues 27 to 50 (VLFIVVLSFYMVSILGNGIIILVS). The Cytoplasmic portion of the chain corresponds to 51–58 (HTDVHLHT). A helical transmembrane segment spans residues 59–80 (PMYFFLANLPFLDMSFTTSIVP). The Extracellular segment spans residues 81–101 (QLLANLWGPQKTISYGGCVVQ). Cysteine 98 and cysteine 190 are joined by a disulfide. The chain crosses the membrane as a helical span at residues 102-121 (FYISHWLGATECVLLATMSY). Topologically, residues 122-140 (DRYAAICRPLHYTVIMHPQ) are cytoplasmic. A helical transmembrane segment spans residues 141–159 (LCLGLALASWLGGLTTSMV). The Extracellular segment spans residues 160 to 196 (GSTLTMLLPLCGNNCIDHFFCEMPLIMQLACVDTSLN). A helical transmembrane segment spans residues 197–220 (EMEMYLASFVFVVLPLGLILVSYG). Over 221-237 (HIARAVLKIRSAEGRRK) the chain is Cytoplasmic. The chain crosses the membrane as a helical span at residues 238 to 260 (AFNTCSSHVAVVSLFYGSIIFMY). The Extracellular segment spans residues 261–273 (LQPAKSTSHEQGK). A helical membrane pass occupies residues 274–293 (FIALFYTVVTPALNPLIYTL). Topologically, residues 294–320 (RNTEVKSALRHMVLENCCGSAGKLAQI) are cytoplasmic.

The protein belongs to the G-protein coupled receptor 1 family.

It localises to the cell membrane. Odorant receptor. The polypeptide is Olfactory receptor 2C3 (OR2C3) (Homo sapiens (Human)).